The following is a 154-amino-acid chain: Transcriptional repressor NrdR (154 aa).

A zinc finger spans residues 3–34; it reads CPFCRHPDSRVVDSRETDEGQAIRRRRSCPEC. The region spanning 46 to 136 is the ATP-cone domain; that stretch reads LAVVKRSGVT…VYRSFSSAED (91 aa).

This sequence belongs to the NrdR family. Zn(2+) serves as cofactor.

Negatively regulates transcription of bacterial ribonucleotide reductase nrd genes and operons by binding to NrdR-boxes. In Mycolicibacterium gilvum (strain PYR-GCK) (Mycobacterium gilvum (strain PYR-GCK)), this protein is Transcriptional repressor NrdR.